The chain runs to 311 residues: Acetyl-coenzyme A carboxylase carboxyl transferase subunit alpha (311 aa).

Residues 32–289 (ELNLLEERLR…KSVLEQKLAQ (258 aa)) enclose the CoA carboxyltransferase C-terminal domain.

This sequence belongs to the AccA family. As to quaternary structure, acetyl-CoA carboxylase is a heterohexamer composed of biotin carboxyl carrier protein (AccB), biotin carboxylase (AccC) and two subunits each of ACCase subunit alpha (AccA) and ACCase subunit beta (AccD).

The protein localises to the cytoplasm. It catalyses the reaction N(6)-carboxybiotinyl-L-lysyl-[protein] + acetyl-CoA = N(6)-biotinyl-L-lysyl-[protein] + malonyl-CoA. It participates in lipid metabolism; malonyl-CoA biosynthesis; malonyl-CoA from acetyl-CoA: step 1/1. Its function is as follows. Component of the acetyl coenzyme A carboxylase (ACC) complex. First, biotin carboxylase catalyzes the carboxylation of biotin on its carrier protein (BCCP) and then the CO(2) group is transferred by the carboxyltransferase to acetyl-CoA to form malonyl-CoA. The protein is Acetyl-coenzyme A carboxylase carboxyl transferase subunit alpha of Exiguobacterium sibiricum (strain DSM 17290 / CCUG 55495 / CIP 109462 / JCM 13490 / 255-15).